The chain runs to 239 residues: Mannose-P-dolichol utilization defect 1 protein homolog 1 (239 aa).

The next 6 membrane-spanning stretches (helical) occupy residues 25–45 (CLLPLISKLLGYFLVAASMTV), 62–82 (LSVVAFELEVIGYTISLAYCL), 91–111 (FGELAFLLIQALILVACIYYF), 123–143 (AILYFAIAPTVFAGKIDPFLF), 174–194 (LSFLTCLMNFGGALARVFTSI), and 202–222 (MLLGIVLSIFTNGIIMSQILL). One can recognise a PQ-loop 1 domain in the interval 27–93 (LPLISKLLGY…KDLPFSAFGE (67 aa)). A PQ-loop 2 domain is found at 150–205 (KHLIFLSARIPQIWKNFRNKSTGQLSFLTCLMNFGGALARVFTSIQEKAPLSMLLG).

It belongs to the MPDU1 (TC 2.A.43.3) family.

The protein resides in the membrane. The polypeptide is Mannose-P-dolichol utilization defect 1 protein homolog 1 (Arabidopsis thaliana (Mouse-ear cress)).